We begin with the raw amino-acid sequence, 251 residues long: NADPH-dependent oxidoreductase (251 aa).

Belongs to the flavin oxidoreductase frp family. The cofactor is FMN.

Reduces FMN, organic nitro compounds and disulfide DTNB. Involved in maintenance of the cellular redox state and the disulfide stress response. The polypeptide is NADPH-dependent oxidoreductase (nfrA) (Staphylococcus epidermidis (strain ATCC 12228 / FDA PCI 1200)).